The chain runs to 231 residues: Hypoxanthine-guanine-xanthine phosphoribosyltransferase (231 aa).

Residues lysine 77, 144-152 (EDIIDTGKT), lysine 176, and aspartate 204 contribute to the GMP site. Catalysis depends on aspartate 148, which acts as the Proton acceptor. Aspartate 204 lines the Mg(2+) pocket.

The protein belongs to the purine/pyrimidine phosphoribosyltransferase family. Homotetramer. Requires Mg(2+) as cofactor.

It is found in the cytoplasm. It carries out the reaction IMP + diphosphate = hypoxanthine + 5-phospho-alpha-D-ribose 1-diphosphate. The enzyme catalyses GMP + diphosphate = guanine + 5-phospho-alpha-D-ribose 1-diphosphate. It catalyses the reaction XMP + diphosphate = xanthine + 5-phospho-alpha-D-ribose 1-diphosphate. The protein operates within purine metabolism; GMP biosynthesis via salvage pathway; GMP from guanine: step 1/1. It functions in the pathway purine metabolism; IMP biosynthesis via salvage pathway; IMP from hypoxanthine: step 1/1. Its pathway is purine metabolism; XMP biosynthesis via salvage pathway; XMP from xanthine: step 1/1. Its function is as follows. Catalyzes the transfer of a ribosyl phosphate group from 5-phosphoribose 1-diphosphate to the N(9) of hypoxanthine, guanine or xanthine, leading to IMP, GMP and XMP, respectively. Plays a central role in the generation of purine nucleotides through the purine salvage pathway. The polypeptide is Hypoxanthine-guanine-xanthine phosphoribosyltransferase (LACZ) (Plasmodium falciparum (isolate K1 / Thailand)).